The chain runs to 334 residues: MDERLVSSEADSHESIIEQSLRPQNLAQYIGQKKVKENLRVFIDAAKMRQETLDHVLLYGPPGLGKTTLASIVANEMGVEMRTTSGPAIERPGDLAAILTALEPGDVLFIDEIHRLNRSIEEVLYPAMEDFCLDIVIGKGPSARSVRLDLPPFTLVGATTRVGLLTAPLRDRFGVLSRLEYYTQEELTDIVSRTADVFEVDIEKAPALEIARRSRGTPRVANRLLRRVRDFAQVLGDSRITEEIAHDALERLQVDALGLDHIDHKLLMGMIEKFSGGPVGLDTISATIGEEPHTIEDVYEPYLLQIGFLQRTPRGRVVTPAVYEHFRLEAPARD.

The tract at residues 1–182 (MDERLVSSEA…FGVLSRLEYY (182 aa)) is large ATPase domain (RuvB-L). ATP contacts are provided by residues Leu-21, Arg-22, Gly-63, Lys-66, Thr-67, Thr-68, 129–131 (EDF), Arg-172, Tyr-182, and Arg-219. Thr-67 is a Mg(2+) binding site. The segment at 183–253 (TQEELTDIVS…IAHDALERLQ (71 aa)) is small ATPAse domain (RuvB-S). A head domain (RuvB-H) region spans residues 256–334 (ALGLDHIDHK…HFRLEAPARD (79 aa)). DNA is bound by residues Arg-311 and Arg-316.

The protein belongs to the RuvB family. As to quaternary structure, homohexamer. Forms an RuvA(8)-RuvB(12)-Holliday junction (HJ) complex. HJ DNA is sandwiched between 2 RuvA tetramers; dsDNA enters through RuvA and exits via RuvB. An RuvB hexamer assembles on each DNA strand where it exits the tetramer. Each RuvB hexamer is contacted by two RuvA subunits (via domain III) on 2 adjacent RuvB subunits; this complex drives branch migration. In the full resolvosome a probable DNA-RuvA(4)-RuvB(12)-RuvC(2) complex forms which resolves the HJ.

The protein resides in the cytoplasm. It carries out the reaction ATP + H2O = ADP + phosphate + H(+). Its function is as follows. The RuvA-RuvB-RuvC complex processes Holliday junction (HJ) DNA during genetic recombination and DNA repair, while the RuvA-RuvB complex plays an important role in the rescue of blocked DNA replication forks via replication fork reversal (RFR). RuvA specifically binds to HJ cruciform DNA, conferring on it an open structure. The RuvB hexamer acts as an ATP-dependent pump, pulling dsDNA into and through the RuvAB complex. RuvB forms 2 homohexamers on either side of HJ DNA bound by 1 or 2 RuvA tetramers; 4 subunits per hexamer contact DNA at a time. Coordinated motions by a converter formed by DNA-disengaged RuvB subunits stimulates ATP hydrolysis and nucleotide exchange. Immobilization of the converter enables RuvB to convert the ATP-contained energy into a lever motion, pulling 2 nucleotides of DNA out of the RuvA tetramer per ATP hydrolyzed, thus driving DNA branch migration. The RuvB motors rotate together with the DNA substrate, which together with the progressing nucleotide cycle form the mechanistic basis for DNA recombination by continuous HJ branch migration. Branch migration allows RuvC to scan DNA until it finds its consensus sequence, where it cleaves and resolves cruciform DNA. The protein is Holliday junction branch migration complex subunit RuvB of Bacillus velezensis (strain DSM 23117 / BGSC 10A6 / LMG 26770 / FZB42) (Bacillus amyloliquefaciens subsp. plantarum).